A 227-amino-acid polypeptide reads, in one-letter code: MKNIQGIVFDLYGTLYDVHSVVQACEEVYPGQGDAISRLWRQKQLEYTWLRSLMGRYVNFEKATEDALRFTCTHLGLSLDDETHQRLSDAYLHLTPYADTADAVRRLKAAGLPLGIISNGSHCSIEQVVTNSEMNWAFDQLISVEDVQVFKPDSRVYSLAEKRMGFPKENILFVSSNAWDASAASNFGFPVCWINRQNGAFDELDAKPTHVVRNLAEMSNWLVNSLD.

The Nucleophile role is filled by D10. An (S)-2-haloacid-binding positions include 11–12 (LY), R41, and 118–119 (SN). The important for catalytic activity stretch occupies residues 175-180 (SSNAWD).

This sequence belongs to the HAD-like hydrolase superfamily. S-2-haloalkanoic acid dehalogenase family. In terms of assembly, homotetramer.

The catalysed reaction is an (S)-2-haloacid + H2O = a (2R)-2-hydroxycarboxylate + a halide anion + H(+). The enzyme catalyses (S)-2-chloropropanoate + H2O = (R)-lactate + chloride + H(+). In terms of biological role, catalyzes the hydrolytic dehalogenation of small (S)-2-haloalkanoic acids to yield the corresponding (R)-2-hydroxyalkanoic acids. Acts on acids of short chain lengths, C(2) to C(4), with inversion of configuration at C-2. Active with 2-halogenated carboxylic acids and converts only the S-isomer (or L-isomer) of 2-chloropropionic acid with inversion of configuration to produce R-lactate (or D-isomer). The protein is (S)-2-haloacid dehalogenase of Pseudomonas putida (Arthrobacter siderocapsulatus).